We begin with the raw amino-acid sequence, 456 residues long: UDP-N-acetylmuramate--L-alanine ligase (456 aa).

118–124 (GTHGKST) provides a ligand contact to ATP.

This sequence belongs to the MurCDEF family.

It localises to the cytoplasm. The enzyme catalyses UDP-N-acetyl-alpha-D-muramate + L-alanine + ATP = UDP-N-acetyl-alpha-D-muramoyl-L-alanine + ADP + phosphate + H(+). Its pathway is cell wall biogenesis; peptidoglycan biosynthesis. Cell wall formation. In Paenarthrobacter aurescens (strain TC1), this protein is UDP-N-acetylmuramate--L-alanine ligase.